A 307-amino-acid chain; its full sequence is Protein TIPIN homolog (307 aa).

Disordered regions lie at residues 1-50 (MASL…SQDA) and 252-279 (ASMD…LSNE). The span at 262–271 (PLPPSQPPTP) shows a compositional bias: pro residues.

It belongs to the CSM3 family.

The protein resides in the cytoplasm. It localises to the nucleus. Functionally, required for normal progression of S-phase. Important for cell survival after DNA damage or replication stress. This Drosophila melanogaster (Fruit fly) protein is Protein TIPIN homolog.